The sequence spans 316 residues: N-acetyl-gamma-glutamyl-phosphate reductase (316 aa).

The active site involves Cys-136.

The protein belongs to the NAGSA dehydrogenase family. Type 1 subfamily.

It localises to the cytoplasm. The enzyme catalyses N-acetyl-L-glutamate 5-semialdehyde + phosphate + NADP(+) = N-acetyl-L-glutamyl 5-phosphate + NADPH + H(+). Its pathway is amino-acid biosynthesis; L-arginine biosynthesis; N(2)-acetyl-L-ornithine from L-glutamate: step 3/4. In terms of biological role, catalyzes the NADPH-dependent reduction of N-acetyl-5-glutamyl phosphate to yield N-acetyl-L-glutamate 5-semialdehyde. The chain is N-acetyl-gamma-glutamyl-phosphate reductase from Xanthomonas oryzae pv. oryzae (strain MAFF 311018).